The following is a 490-amino-acid chain: Gram-negative bacteria-binding protein 3 (490 aa).

A signal peptide spans 1 to 25 (MADALRFVAWSCCLQLLFLLLGVQG). Residues 26 to 126 (YEVPKAKIDV…GSFVVNGYSG (101 aa)) form the CBM39 domain. Residues 162–490 (TEVNGAPTRC…KIDYVKVYSL (329 aa)) form the GH16 domain. N-linked (GlcNAc...) asparagine glycans are attached at residues N362 and N373.

Belongs to the insect beta-1,3-glucan binding protein family.

The protein resides in the secreted. Functionally, involved in the recognition of invading microorganisms. Binds specifically to beta-1,3-glucan and activates the phenoloxidase cascade. This Drosophila melanogaster (Fruit fly) protein is Gram-negative bacteria-binding protein 3.